The following is a 384-amino-acid chain: Guanine nucleotide-binding protein alpha-2 subunit (384 aa).

A disordered region spans residues 1 to 23 (MGLVCSRNRRYRDSDPEENAQAA). Residue Gly-2 is the site of N-myristoyl glycine attachment. A lipid anchor (S-palmitoyl cysteine) is attached at Cys-5. Residues 38 to 384 (HIQKLLLLGA…RRNLFEAGLL (347 aa)) enclose the G-alpha domain. A G1 motif region spans residues 41 to 54 (KLLLLGAGESGKST). GTP contacts are provided by Glu-49, Ser-50, Gly-51, Lys-52, Ser-53, Thr-54, Asp-163, Leu-188, Tyr-189, Thr-194, Gly-222, Asn-288, Lys-289, Asp-291, and Ala-356. Mg(2+) is bound at residue Ser-53. Residues 186–194 (DVLYARVRT) are G2 motif. Residue Thr-194 participates in Mg(2+) binding. The G3 motif stretch occupies residues 215-224 (YRLFDVGGQR). A G4 motif region spans residues 284–291 (MLFLNKFD). The G5 motif stretch occupies residues 354 to 359 (TTALDQ).

It belongs to the G-alpha family. G proteins are composed of 3 units; alpha, beta and gamma. The alpha chain contains the guanine nucleotide binding site. The cofactor is Mg(2+).

Guanine nucleotide-binding proteins (G proteins) are involved as modulators or transducers in various transmembrane signaling systems. The protein is Guanine nucleotide-binding protein alpha-2 subunit (GPA2) of Pisum sativum (Garden pea).